The sequence spans 549 residues: Lysine-specific demethylase JMJ31 (549 aa).

In terms of domain architecture, JmjC spans 125 to 296 (DYRPGQIYLA…SNMPEHMDSY (172 aa)). H184, D186, and H266 together coordinate Fe cation.

Belongs to the JARID1 histone demethylase family. The cofactor is Fe(2+). As to expression, mostly expressed in leaves and inflorescences, and, to a lower extent, in roots, siliques and stems.

The protein localises to the nucleus. In terms of biological role, may function as histone H3 lysine demethylase and be involved in regulation of gene expression. This chain is Lysine-specific demethylase JMJ31, found in Arabidopsis thaliana (Mouse-ear cress).